Here is a 98-residue protein sequence, read N- to C-terminus: NADH-ubiquinone oxidoreductase chain 4L (98 aa).

3 helical membrane-spanning segments follow: residues 1–21, 29–49, and 61–81; these read MPSI…GMLI, SLLC…LTAL, and IVLL…LVMV.

This sequence belongs to the complex I subunit 4L family. As to quaternary structure, core subunit of respiratory chain NADH dehydrogenase (Complex I) which is composed of 45 different subunits.

The protein localises to the mitochondrion inner membrane. It catalyses the reaction a ubiquinone + NADH + 5 H(+)(in) = a ubiquinol + NAD(+) + 4 H(+)(out). Core subunit of the mitochondrial membrane respiratory chain NADH dehydrogenase (Complex I) which catalyzes electron transfer from NADH through the respiratory chain, using ubiquinone as an electron acceptor. Part of the enzyme membrane arm which is embedded in the lipid bilayer and involved in proton translocation. The sequence is that of NADH-ubiquinone oxidoreductase chain 4L (MT-ND4L) from Lepus europaeus (European hare).